We begin with the raw amino-acid sequence, 397 residues long: Purine ribonucleoside efflux pump NepI (397 aa).

At 1–21 (MNENIAEKFRADGVARPNWSA) the chain is on the cytoplasmic side. The helical transmembrane segment at 22–42 (VFAVAFCVACLITVEFLPVSL) threads the bilayer. Over 43–54 (LTPMAQDLGISE) the chain is Periplasmic. A helical transmembrane segment spans residues 55-75 (GVAGQSVTVTAFVAMFSSLFI). The Cytoplasmic segment spans residues 76-85 (TQIIQATDRR). The chain crosses the membrane as a helical span at residues 86–106 (YIVILFAVLLTASCLMVSFAN). S107 is a topological domain (periplasmic). A helical membrane pass occupies residues 108-128 (FTLLLLGRACLGLALGGFWAM). At 129–147 (SASLTMRLVPARTVPKALS) the chain is on the cytoplasmic side. A helical membrane pass occupies residues 148–168 (VIFGAVSIALVIAAPLGSFLG). At 169–175 (GIIGWRN) the chain is on the periplasmic side. A helical transmembrane segment spans residues 176–196 (VFNAAAVMGVLCVIWVVKSLP). Residues 197–215 (SLPGEPSHQKQNMFSLLQR) lie on the Cytoplasmic side of the membrane. A helical transmembrane segment spans residues 216-236 (PGVMAGMIAIFMSFAGQFAFF). Over 237–255 (TYIRPVYMNLAGFDVDGLT) the chain is Periplasmic. A helical membrane pass occupies residues 256–276 (LVLLSFGIASFVGTSFSSYVL). At 277 to 281 (KRSVK) the chain is on the cytoplasmic side. The chain crosses the membrane as a helical span at residues 282–302 (LALAGAPLLLALSALTLIVWG). Residues 303 to 305 (SDK) are Periplasmic-facing. A helical transmembrane segment spans residues 306 to 326 (TVAAAIAIIWGLAFALVPVGW). The Cytoplasmic segment spans residues 327 to 343 (STWITRSLADQAEKAGS). The chain crosses the membrane as a helical span at residues 344-364 (IQVAVIQLANTCGAAVGGYAL). Residues 365–366 (DN) are Periplasmic-facing. The chain crosses the membrane as a helical span at residues 367-387 (FGLLSPLALSGGLMLLTALVV). Topologically, residues 388–397 (AAKVRITPMS) are cytoplasmic.

Belongs to the major facilitator superfamily. DHA1 family. NepI (TC 2.A.1.2.26) subfamily.

The protein localises to the cell inner membrane. The catalysed reaction is inosine(in) + H(+)(out) = inosine(out) + H(+)(in). It catalyses the reaction guanosine(in) + H(+)(out) = guanosine(out) + H(+)(in). Functionally, involved in the efflux of purine ribonucleosides, such as inosine and guanosine. This is Purine ribonucleoside efflux pump NepI from Salmonella choleraesuis (strain SC-B67).